The primary structure comprises 251 residues: CDP-diacylglycerol pyrophosphatase (251 aa).

A helical membrane pass occupies residues 4–24; it reads AGLLFLVMIVIAVVASGIGYW.

Belongs to the Cdh family.

The protein localises to the cell inner membrane. The catalysed reaction is a CDP-1,2-diacyl-sn-glycerol + H2O = a 1,2-diacyl-sn-glycero-3-phosphate + CMP + 2 H(+). It participates in phospholipid metabolism; CDP-diacylglycerol degradation; phosphatidate from CDP-diacylglycerol: step 1/1. This Escherichia coli O8 (strain IAI1) protein is CDP-diacylglycerol pyrophosphatase.